Here is a 476-residue protein sequence, read N- to C-terminus: Serine/threonine-protein kinase PBL36 (476 aa).

One can recognise a Protein kinase domain in the interval 126-412; it reads FRPESLLGEG…VEALKPLPNL (287 aa). Residues 132 to 140 and Lys164 contribute to the ATP site; that span reads LGEGGFGCV. Phosphotyrosine is present on Tyr209. Residue Asp259 is the Proton acceptor of the active site. Ser263 and Ser293 each carry phosphoserine. 2 positions are modified to phosphothreonine: Thr294 and Thr299. Phosphotyrosine is present on Tyr307. The disordered stretch occupies residues 431-476; sequence NGVRTQGGGFVSRNGPPMRSLSSLNLPQASPYRYARQSPKPKGKEP.

It belongs to the protein kinase superfamily. Ser/Thr protein kinase family. Interacts with SD129. Phosphorylated by SD129 in response to the pathogen-associated molecular pattern (PAMP) 3-OH-C10:0, a medium-chain 3-hydroxy fatty acid.

Its subcellular location is the cell membrane. It carries out the reaction L-seryl-[protein] + ATP = O-phospho-L-seryl-[protein] + ADP + H(+). The catalysed reaction is L-threonyl-[protein] + ATP = O-phospho-L-threonyl-[protein] + ADP + H(+). Functionally, involved in chitin-triggered immune signaling and is required for reactive oxygen species (ROS) production. Acts downstream of SD129 in defense signaling triggered by the pathogen-associated molecular pattern (PAMP) 3-OH-C10:0, a medium-chain 3-hydroxy fatty acid. The sequence is that of Serine/threonine-protein kinase PBL36 from Arabidopsis thaliana (Mouse-ear cress).